We begin with the raw amino-acid sequence, 488 residues long: Glutamyl-tRNA(Gln) amidotransferase subunit A (488 aa).

Catalysis depends on charge relay system residues Lys-77 and Ser-152. Residue Ser-176 is the Acyl-ester intermediate of the active site.

It belongs to the amidase family. GatA subfamily. Heterotrimer of A, B and C subunits.

The catalysed reaction is L-glutamyl-tRNA(Gln) + L-glutamine + ATP + H2O = L-glutaminyl-tRNA(Gln) + L-glutamate + ADP + phosphate + H(+). Functionally, allows the formation of correctly charged Gln-tRNA(Gln) through the transamidation of misacylated Glu-tRNA(Gln) in organisms which lack glutaminyl-tRNA synthetase. The reaction takes place in the presence of glutamine and ATP through an activated gamma-phospho-Glu-tRNA(Gln). The polypeptide is Glutamyl-tRNA(Gln) amidotransferase subunit A (Streptococcus pyogenes serotype M3 (strain ATCC BAA-595 / MGAS315)).